The sequence spans 179 residues: MAQFSESVDVPDMGRRQFMNLLTFGTVTGVALGALYPVVNYFIPPATGGAGGGTTAKDELGNDVSVSKFLESHNVGDRTLVQGLKGDPTYIVVESKEAITDYGINAVCTHLGCVVPWNAAENKFKCPCHGSQYDATGKVVRGPAPKSLALSHAKTENDKIVLTPWTETDFRTGEEPWWS.

Residues Leu-21–Ile-43 traverse the membrane as a helical segment. Residues Gly-61 to Leu-162 enclose the Rieske domain. Residues Cys-108, His-110, Cys-126, and His-129 each contribute to the [2Fe-2S] cluster site. The cysteines at positions 113 and 128 are disulfide-linked.

This sequence belongs to the Rieske iron-sulfur protein family. In terms of assembly, the 4 large subunits of the cytochrome b6-f complex are cytochrome b6, subunit IV (17 kDa polypeptide, PetD), cytochrome f and the Rieske protein, while the 4 small subunits are PetG, PetL, PetM and PetN. The complex functions as a dimer. [2Fe-2S] cluster is required as a cofactor.

The protein localises to the cellular thylakoid membrane. It carries out the reaction 2 oxidized [plastocyanin] + a plastoquinol + 2 H(+)(in) = 2 reduced [plastocyanin] + a plastoquinone + 4 H(+)(out). Its function is as follows. Component of the cytochrome b6-f complex, which mediates electron transfer between photosystem II (PSII) and photosystem I (PSI), cyclic electron flow around PSI, and state transitions. The sequence is that of Cytochrome b6-f complex iron-sulfur subunit 1 from Trichormus variabilis (strain ATCC 29413 / PCC 7937) (Anabaena variabilis).